The chain runs to 170 residues: Small ribosomal subunit protein uS15 (170 aa).

Residues 1–10 are compositionally biased toward basic residues; that stretch reads MARMHSRKKG. A disordered region spans residues 1-20; the sequence is MARMHSRKKGSSGSRPPVVD.

Belongs to the universal ribosomal protein uS15 family. In terms of assembly, part of the 30S ribosomal subunit.

The polypeptide is Small ribosomal subunit protein uS15 (Methanothrix thermoacetophila (strain DSM 6194 / JCM 14653 / NBRC 101360 / PT) (Methanosaeta thermophila)).